A 189-amino-acid chain; its full sequence is Interferon alpha-16 (189 aa).

A signal peptide spans methionine 1–glycine 23. 2 disulfides stabilise this stretch: cysteine 24-cysteine 122 and cysteine 52-cysteine 162.

The protein belongs to the alpha/beta interferon family.

It localises to the secreted. Functionally, produced by macrophages, IFN-alpha have antiviral activities. Interferon stimulates the production of two enzymes: a protein kinase and an oligoadenylate synthetase. The chain is Interferon alpha-16 (IFNA16) from Homo sapiens (Human).